Consider the following 184-residue polypeptide: ATP synthase subunit b 1 (184 aa).

A helical membrane pass occupies residues 4–24; that stretch reads LSILAVLAASPAMAATGPFLS.

This sequence belongs to the ATPase B chain family. In terms of assembly, F-type ATPases have 2 components, F(1) - the catalytic core - and F(0) - the membrane proton channel. F(1) has five subunits: alpha(3), beta(3), gamma(1), delta(1), epsilon(1). F(0) has three main subunits: a(1), b(2) and c(10-14). The alpha and beta chains form an alternating ring which encloses part of the gamma chain. F(1) is attached to F(0) by a central stalk formed by the gamma and epsilon chains, while a peripheral stalk is formed by the delta and b chains.

The protein resides in the cell inner membrane. In terms of biological role, f(1)F(0) ATP synthase produces ATP from ADP in the presence of a proton or sodium gradient. F-type ATPases consist of two structural domains, F(1) containing the extramembraneous catalytic core and F(0) containing the membrane proton channel, linked together by a central stalk and a peripheral stalk. During catalysis, ATP synthesis in the catalytic domain of F(1) is coupled via a rotary mechanism of the central stalk subunits to proton translocation. Component of the F(0) channel, it forms part of the peripheral stalk, linking F(1) to F(0). The chain is ATP synthase subunit b 1 from Cereibacter sphaeroides (strain ATCC 17023 / DSM 158 / JCM 6121 / CCUG 31486 / LMG 2827 / NBRC 12203 / NCIMB 8253 / ATH 2.4.1.) (Rhodobacter sphaeroides).